The primary structure comprises 251 residues: B3 domain-containing protein At2g24670 (251 aa).

Residues 48-111 (TTPSTVMESK…SSKTREPTPG (64 aa)) form a disordered region. Basic and acidic residues predominate over residues 56 to 70 (SKSHIHDHSLRESPT). Residues 153–249 (VSQIVELEFL…TLYFALVPLY (97 aa)) constitute a DNA-binding region (TF-B3).

It is found in the nucleus. This Arabidopsis thaliana (Mouse-ear cress) protein is B3 domain-containing protein At2g24670.